Consider the following 1401-residue polypeptide: DNA-directed RNA polymerase subunit beta' (1401 aa).

Zn(2+)-binding residues include C70, C72, C85, and C88. Mg(2+) contacts are provided by D460, D462, and D464. Zn(2+) is bound by residues C808, C882, C889, and C892.

It belongs to the RNA polymerase beta' chain family. The RNAP catalytic core consists of 2 alpha, 1 beta, 1 beta' and 1 omega subunit. When a sigma factor is associated with the core the holoenzyme is formed, which can initiate transcription. The cofactor is Mg(2+). Requires Zn(2+) as cofactor.

It catalyses the reaction RNA(n) + a ribonucleoside 5'-triphosphate = RNA(n+1) + diphosphate. In terms of biological role, DNA-dependent RNA polymerase catalyzes the transcription of DNA into RNA using the four ribonucleoside triphosphates as substrates. The chain is DNA-directed RNA polymerase subunit beta' from Legionella pneumophila subsp. pneumophila (strain Philadelphia 1 / ATCC 33152 / DSM 7513).